Here is a 351-residue protein sequence, read N- to C-terminus: Dihydroorotate dehydrogenase (quinone) (351 aa).

FMN is bound by residues 61–65 (AGLDK) and Thr-85. Lys-65 contacts substrate. 110-114 (NRMGF) is a binding site for substrate. 2 residues coordinate FMN: Asn-139 and Asn-172. A substrate-binding site is contributed by Asn-172. Ser-175 serves as the catalytic Nucleophile. Asn-177 contributes to the substrate binding site. 2 residues coordinate FMN: Lys-217 and Thr-245. 246–247 (NT) provides a ligand contact to substrate. FMN contacts are provided by residues Gly-268, Gly-297, and 318 to 319 (YS).

Belongs to the dihydroorotate dehydrogenase family. Type 2 subfamily. In terms of assembly, monomer. The cofactor is FMN.

Its subcellular location is the cell membrane. The catalysed reaction is (S)-dihydroorotate + a quinone = orotate + a quinol. It functions in the pathway pyrimidine metabolism; UMP biosynthesis via de novo pathway; orotate from (S)-dihydroorotate (quinone route): step 1/1. Catalyzes the conversion of dihydroorotate to orotate with quinone as electron acceptor. The protein is Dihydroorotate dehydrogenase (quinone) of Xanthomonas oryzae pv. oryzae (strain PXO99A).